Consider the following 545-residue polypeptide: Thermosome subunit (545 aa).

This sequence belongs to the TCP-1 chaperonin family. Forms an oligomeric complex of eight-membered rings.

In terms of biological role, molecular chaperone; binds unfolded polypeptides in vitro, and has a weak ATPase activity. The protein is Thermosome subunit (ths) of Desulfurococcus sp. (strain SY).